Reading from the N-terminus, the 241-residue chain is Methylthioribulose-1-phosphate dehydratase (241 aa).

The span at 1-11 shows a compositional bias: polar residues; that stretch reads MSSLCDTSNGE. The tract at residues 1–20 is disordered; that stretch reads MSSLCDTSNGESHADPCQDK. Cys-96 contributes to the substrate binding site. Positions 114 and 116 each coordinate Zn(2+). The Proton donor/acceptor role is filled by Glu-138. His-194 is a binding site for Zn(2+).

This sequence belongs to the aldolase class II family. MtnB subfamily. The cofactor is Zn(2+).

The protein localises to the cytoplasm. The enzyme catalyses 5-(methylsulfanyl)-D-ribulose 1-phosphate = 5-methylsulfanyl-2,3-dioxopentyl phosphate + H2O. Its pathway is amino-acid biosynthesis; L-methionine biosynthesis via salvage pathway; L-methionine from S-methyl-5-thio-alpha-D-ribose 1-phosphate: step 2/6. Functionally, catalyzes the dehydration of methylthioribulose-1-phosphate (MTRu-1-P) into 2,3-diketo-5-methylthiopentyl-1-phosphate (DK-MTP-1-P). Functions in the methionine salvage pathway. May play a role in apoptosis. In Osmerus mordax (Rainbow smelt), this protein is Methylthioribulose-1-phosphate dehydratase.